The sequence spans 692 residues: DNA ligase (692 aa).

Residues 35-39 (DLVYD), 88-89 (SL), and E117 each bind NAD(+). Residue K119 is the N6-AMP-lysine intermediate of the active site. 4 residues coordinate NAD(+): R140, E176, K301, and K325. C416, C419, C434, and C439 together coordinate Zn(2+). The BRCT domain occupies 611-692 (LTNQSNSWAS…FDLIKNSKKT (82 aa)).

It belongs to the NAD-dependent DNA ligase family. LigA subfamily. It depends on Mg(2+) as a cofactor. Requires Mn(2+) as cofactor.

The enzyme catalyses NAD(+) + (deoxyribonucleotide)n-3'-hydroxyl + 5'-phospho-(deoxyribonucleotide)m = (deoxyribonucleotide)n+m + AMP + beta-nicotinamide D-nucleotide.. Functionally, DNA ligase that catalyzes the formation of phosphodiester linkages between 5'-phosphoryl and 3'-hydroxyl groups in double-stranded DNA using NAD as a coenzyme and as the energy source for the reaction. It is essential for DNA replication and repair of damaged DNA. This chain is DNA ligase, found in Mesomycoplasma hyopneumoniae (strain J / ATCC 25934 / NCTC 10110) (Mycoplasma hyopneumoniae).